The primary structure comprises 296 residues: GTPase Era (296 aa).

The 168-residue stretch at 7 to 174 folds into the Era-type G domain; that stretch reads KCSMSAIVGA…VDYLCETSPY (168 aa). A G1 region spans residues 15-22; it reads GATNAGKS. Residue 15–22 participates in GTP binding; it reads GATNAGKS. The interval 41-45 is G2; it reads QTTRV. Residues 62–65 form a G3 region; it reads DTPG. GTP is bound by residues 62-66 and 124-127; these read DTPGI and NKID. Positions 124 to 127 are G4; sequence NKID. Residues 153–155 form a G5 region; that stretch reads ISA. The 78-residue stretch at 205 to 282 folds into the KH type-2 domain; the sequence is LRHELPYSLS…HLFLFVKVRE (78 aa).

This sequence belongs to the TRAFAC class TrmE-Era-EngA-EngB-Septin-like GTPase superfamily. Era GTPase family. In terms of assembly, monomer.

The protein localises to the cytoplasm. It is found in the cell inner membrane. An essential GTPase that binds both GDP and GTP, with rapid nucleotide exchange. Plays a role in 16S rRNA processing and 30S ribosomal subunit biogenesis and possibly also in cell cycle regulation and energy metabolism. This is GTPase Era from Ehrlichia ruminantium (strain Welgevonden).